The sequence spans 132 residues: Small ribosomal subunit protein uS8c (132 aa).

Belongs to the universal ribosomal protein uS8 family. As to quaternary structure, part of the 30S ribosomal subunit.

The protein localises to the plastid. The protein resides in the chloroplast. Functionally, one of the primary rRNA binding proteins, it binds directly to 16S rRNA central domain where it helps coordinate assembly of the platform of the 30S subunit. The chain is Small ribosomal subunit protein uS8c (rps8) from Chaetosphaeridium globosum (Charophycean green alga).